Here is a 268-residue protein sequence, read N- to C-terminus: Glutamate racemase (268 aa).

Residues 10–11 (DS) and 42–43 (YG) contribute to the substrate site. The active-site Proton donor/acceptor is Cys-73. 74 to 75 (NT) contributes to the substrate binding site. Residue Cys-184 is the Proton donor/acceptor of the active site. 185–186 (TH) is a binding site for substrate.

This sequence belongs to the aspartate/glutamate racemases family.

It carries out the reaction L-glutamate = D-glutamate. It participates in cell wall biogenesis; peptidoglycan biosynthesis. Its function is as follows. Provides the (R)-glutamate required for cell wall biosynthesis. This chain is Glutamate racemase, found in Carnobacterium sp. (strain St2).